A 124-amino-acid polypeptide reads, in one-letter code: Small ribosomal subunit protein uS12 (124 aa).

Aspartate 89 carries the post-translational modification 3-methylthioaspartic acid.

It belongs to the universal ribosomal protein uS12 family. Part of the 30S ribosomal subunit. Contacts proteins S8 and S17. May interact with IF1 in the 30S initiation complex.

Functionally, with S4 and S5 plays an important role in translational accuracy. Its function is as follows. Interacts with and stabilizes bases of the 16S rRNA that are involved in tRNA selection in the A site and with the mRNA backbone. Located at the interface of the 30S and 50S subunits, it traverses the body of the 30S subunit contacting proteins on the other side and probably holding the rRNA structure together. The combined cluster of proteins S8, S12 and S17 appears to hold together the shoulder and platform of the 30S subunit. In Leptospira biflexa serovar Patoc (strain Patoc 1 / Ames), this protein is Small ribosomal subunit protein uS12.